The sequence spans 488 residues: Dipeptide and tripeptide permease A (488 aa).

At 1 to 35 (MSTANTPEDEQKPSLNAFKQPRAFYLIFSIELWER) the chain is on the cytoplasmic side. The helical transmembrane segment at 36–56 (FGYYGLQGIMAVYLVKMLGMS) threads the bilayer. Residues 57 to 60 (EAEA) lie on the Periplasmic side of the membrane. A helical transmembrane segment spans residues 61 to 81 (ITVFAAFTALVYGFVAIGGWL). At 82–90 (GDKILGTKR) the chain is on the cytoplasmic side. Residues 91–111 (VIVLGAIVLAIGYAMVAFSDH) traverse the membrane as a helical segment. Residues 112–114 (DKD) are Periplasmic-facing. Residues 115-135 (MIYWGLATIAVGNGLFKANPS) traverse the membrane as a helical segment. The Cytoplasmic segment spans residues 136-154 (SLLATCYEKDDPQLDGAFT). The helical transmembrane segment at 155 to 175 (MYYMSINVGSFLSMLATPWLA) threads the bilayer. Topologically, residues 176 to 179 (ANYG) are periplasmic. A helical membrane pass occupies residues 180 to 200 (WDVAFALSVVGMLITLANFML). Residues 201–219 (CRGWIKDKGSRPDFEPLNY) are Cytoplasmic-facing. A helical membrane pass occupies residues 220-240 (LKLLLTLVGIVALTAVSTWLL). Residue His-241 is a topological domain, periplasmic. The chain crosses the membrane as a helical span at residues 242–262 (NNEVATWSLAIISLGIILIFA). The Cytoplasmic portion of the chain corresponds to 263-275 (RETFMMKGVARRK). A helical transmembrane segment spans residues 276-296 (MIVAFLLMVEAVVFFVLYDQM). Residues 297–324 (PTSLNFFAIHNVEHAILGFSVEPEQFQS) are Periplasmic-facing. Residues 325 to 345 (LNPFWIMLASPLLAAIYNFMG) form a helical membrane-spanning segment. At 346–353 (DKLPMPYK) the chain is on the cytoplasmic side. Residues 354–374 (FTVGMFLSATAFLVLPLGASM) form a helical membrane-spanning segment. The Periplasmic portion of the chain corresponds to 375–391 (ANEAGIVSSWWLVASYG). A helical membrane pass occupies residues 392-412 (FQSIGELMISGLGLAMVAQLV). Residues 413–415 (PQR) are Cytoplasmic-facing. The helical transmembrane segment at 416-436 (LMGFIMGAWFLTSAAAAIIAG) threads the bilayer. At 437 to 460 (KVASLMAVPEDVQNAHASLEIYSS) the chain is on the periplasmic side. Residues 461–481 (VFLQIGIVTGVIALLMLFTAP) traverse the membrane as a helical segment. Over 482 to 488 (MLSKMTQ) the chain is Cytoplasmic.

Belongs to the major facilitator superfamily. Proton-dependent oligopeptide transporter (POT/PTR) (TC 2.A.17) family. DtpA subfamily.

It is found in the cell inner membrane. Its function is as follows. Proton-dependent permease that transports di- and tripeptides. The sequence is that of Dipeptide and tripeptide permease A from Proteus mirabilis (strain HI4320).